The following is a 116-amino-acid chain: Putative UPF0320 protein YLL065W (116 aa).

The protein belongs to the UPF0320 family.

The sequence is that of Putative UPF0320 protein YLL065W from Saccharomyces cerevisiae (strain ATCC 204508 / S288c) (Baker's yeast).